A 349-amino-acid chain; its full sequence is PDZ and LIM domain protein 2 (349 aa).

In terms of domain architecture, PDZ spans 1 to 84 (MALTVDVAGP…PLRLQLDRSQ (84 aa)). A disordered region spans residues 74 to 147 (SPLRLQLDRS…TPPPTSPVAL (74 aa)). Over residues 81-94 (DRSQTASPGQTNGE) the composition is skewed to polar residues. Residues serine 124, serine 127, serine 129, serine 134, and serine 137 each carry the phosphoserine modification. Phosphothreonine is present on residues threonine 138 and threonine 142. Phosphoserine occurs at positions 143 and 163. The interval 169–212 (AHHLTYPGHPTSQQAGHSSPSDSAVRVLLHSPGRPSSPRFSSLD) is disordered. The segment covering 178 to 190 (PTSQQAGHSSPSD) has biased composition (polar residues). Phosphoserine is present on residues serine 199, serine 204, serine 205, serine 209, serine 210, and serine 263. The segment covering 199–210 (SPGRPSSPRFSS) has biased composition (low complexity). In terms of domain architecture, LIM zinc-binding spans 281–341 (HTCEKCSVNI…EKHARQRYSM (61 aa)).

Interacts with alpha-actinins ACTN1 and ACTN4, FLNA and MYH9. Interacts (via LIM zinc-binding domain) with MKRN2. As to expression, highly expressed in lung. Expressed at intermediate level in kidney, testis and spleen. Weakly expressed in heart and brain.

The protein localises to the cytoplasm. Its subcellular location is the cytoskeleton. Probable adapter protein located at the actin cytoskeleton that promotes cell attachment. Necessary for the migratory capacity of epithelial cells. Overexpression enhances cell adhesion to collagen and fibronectin and suppresses anchorage independent growth. May contribute to tumor cell migratory capacity. In Mus musculus (Mouse), this protein is PDZ and LIM domain protein 2 (Pdlim2).